A 387-amino-acid polypeptide reads, in one-letter code: Phosphoglycerate kinase (387 aa).

Residues 21 to 23 (DLN), Arg36, 59 to 62 (HLGR), Arg113, and Arg146 each bind substrate. Residues Lys197, Glu314, and 340-343 (GGDT) contribute to the ATP site.

It belongs to the phosphoglycerate kinase family. In terms of assembly, monomer.

It is found in the cytoplasm. It catalyses the reaction (2R)-3-phosphoglycerate + ATP = (2R)-3-phospho-glyceroyl phosphate + ADP. The protein operates within carbohydrate degradation; glycolysis; pyruvate from D-glyceraldehyde 3-phosphate: step 2/5. This is Phosphoglycerate kinase from Alcanivorax borkumensis (strain ATCC 700651 / DSM 11573 / NCIMB 13689 / SK2).